A 245-amino-acid chain; its full sequence is Glutathione S-transferase F4 (245 aa).

Residues 25 to 106 (AGYKVHGDPF…YIAYVHSSRG (82 aa)) form the GST N-terminal domain. Glutathione contacts are provided by residues 35-36 (ST), 64-65 (HK), 77-78 (QV), and 90-91 (ES). In terms of domain architecture, GST C-terminal spans 114 to 244 (SHETMATLTM…QEKSWFNKPR (131 aa)).

Belongs to the GST superfamily. Phi family.

Its subcellular location is the cytoplasm. It is found in the cytosol. It carries out the reaction RX + glutathione = an S-substituted glutathione + a halide anion + H(+). In terms of biological role, may be involved in the conjugation of reduced glutathione to a wide number of exogenous and endogenous hydrophobic electrophiles and have a detoxification role against certain herbicides. This is Glutathione S-transferase F4 (GSTF4) from Arabidopsis thaliana (Mouse-ear cress).